The primary structure comprises 249 residues: Isoprenyl transferase (249 aa).

Residue Asp25 is part of the active site. Position 25 (Asp25) interacts with Mg(2+). Residues 26–29 (GNGR), Trp30, Arg38, His42, and 70–72 (STE) each bind substrate. The Proton acceptor role is filled by Asn73. Substrate-binding positions include Trp74, Arg76, Arg197, and 203 to 205 (RLS). Glu216 is a Mg(2+) binding site.

The protein belongs to the UPP synthase family. Homodimer. The cofactor is Mg(2+).

Catalyzes the condensation of isopentenyl diphosphate (IPP) with allylic pyrophosphates generating different type of terpenoids. This is Isoprenyl transferase from Streptococcus pyogenes serotype M1.